Consider the following 270-residue polypeptide: MISFPNAKINLGLSVLSKRPDGYHNIETCFYPIPWNDMLEIIPAKETVFTSSGNNIPGTSASNLCLKTYTLLKEKYPLSPVHIHLHKRIPIGAGLGGGSSDAAFTCKLLNDVFALKLSAAEMEDIVRPVGSDCAFFIENTSILAHEKGDYFSHPGIVNLSGKWIYLIHPGIHVATKEAYDGVVPNTDRKPIGDILKQPLSVWKAELVNDFERSVFEKYPAIKTLKEQMYKQGAAYAAMSGSGSTVFGIFNTKPETFHENTSNIQSCIAPL.

K8 is an active-site residue. 90–100 serves as a coordination point for ATP; sequence PIGAGLGGGSS. D132 is an active-site residue.

Belongs to the GHMP kinase family. IspE subfamily.

It carries out the reaction 4-CDP-2-C-methyl-D-erythritol + ATP = 4-CDP-2-C-methyl-D-erythritol 2-phosphate + ADP + H(+). It functions in the pathway isoprenoid biosynthesis; isopentenyl diphosphate biosynthesis via DXP pathway; isopentenyl diphosphate from 1-deoxy-D-xylulose 5-phosphate: step 3/6. Its function is as follows. Catalyzes the phosphorylation of the position 2 hydroxy group of 4-diphosphocytidyl-2C-methyl-D-erythritol. The protein is 4-diphosphocytidyl-2-C-methyl-D-erythritol kinase of Cytophaga hutchinsonii (strain ATCC 33406 / DSM 1761 / CIP 103989 / NBRC 15051 / NCIMB 9469 / D465).